Reading from the N-terminus, the 205-residue chain is Shieldin complex subunit 1 (205 aa).

As to quaternary structure, component of the shieldin complex, consisting of SHLD1, SHLD2, SHLD3 and MAD2L2/REV7. Within the complex, SHLD2 forms a scaffold which interacts with a SHLD3-MAD2L2 subcomplex via its N-terminus, and with SHLD1 via its C-terminus. Interacts with ASTE1.

It localises to the chromosome. Its function is as follows. Component of the shieldin complex, which plays an important role in repair of DNA double-stranded breaks (DSBs). During G1 and S phase of the cell cycle, the complex functions downstream of TP53BP1 to promote non-homologous end joining (NHEJ) and suppress DNA end resection. Mediates various NHEJ-dependent processes including immunoglobulin class-switch recombination, and fusion of unprotected telomeres. The polypeptide is Shieldin complex subunit 1 (Homo sapiens (Human)).